We begin with the raw amino-acid sequence, 314 residues long: tRNA pseudouridine synthase B (314 aa).

The active-site Nucleophile is the D41.

The protein belongs to the pseudouridine synthase TruB family. Type 1 subfamily.

The enzyme catalyses uridine(55) in tRNA = pseudouridine(55) in tRNA. Functionally, responsible for synthesis of pseudouridine from uracil-55 in the psi GC loop of transfer RNAs. This is tRNA pseudouridine synthase B from Prochlorococcus marinus (strain NATL2A).